Reading from the N-terminus, the 178-residue chain is ATP-dependent protease subunit HslV (178 aa).

T7 is a catalytic residue. Positions 162, 165, and 168 each coordinate Na(+).

It belongs to the peptidase T1B family. HslV subfamily. A double ring-shaped homohexamer of HslV is capped on each side by a ring-shaped HslU homohexamer. The assembly of the HslU/HslV complex is dependent on binding of ATP.

It localises to the cytoplasm. The catalysed reaction is ATP-dependent cleavage of peptide bonds with broad specificity.. Its activity is regulated as follows. Allosterically activated by HslU binding. Its function is as follows. Protease subunit of a proteasome-like degradation complex believed to be a general protein degrading machinery. This chain is ATP-dependent protease subunit HslV, found in Herminiimonas arsenicoxydans.